The primary structure comprises 133 residues: FPRL1 inhibitory protein (133 aa).

A signal peptide spans 1–28 (MKKNITKTIIASTVIAAGLLTQTNDAKA).

The protein belongs to the CHIPS/FLIPr family.

Its subcellular location is the secreted. In terms of biological role, may be involved in countering the first line of host defense mechanisms. Impairs the leukocyte response to FPRL1 agonists by binding directly to host FPRL1. The polypeptide is FPRL1 inhibitory protein (flr) (Staphylococcus aureus (strain Mu50 / ATCC 700699)).